The chain runs to 128 residues: Fluoride-specific ion channel FluC (128 aa).

A run of 4 helical transmembrane segments spans residues 4-24 (LLLA…RYLI), 39-59 (GTLI…EFSM), 71-91 (FLTT…YETI), and 99-119 (ITLG…FVVI). Gly78 and Thr81 together coordinate Na(+).

This sequence belongs to the fluoride channel Fluc/FEX (TC 1.A.43) family.

It localises to the cell membrane. The catalysed reaction is fluoride(in) = fluoride(out). Na(+) is not transported, but it plays an essential structural role and its presence is essential for fluoride channel function. Its function is as follows. Fluoride-specific ion channel. Important for reducing fluoride concentration in the cell, thus reducing its toxicity. In Clostridium perfringens (strain ATCC 13124 / DSM 756 / JCM 1290 / NCIMB 6125 / NCTC 8237 / Type A), this protein is Fluoride-specific ion channel FluC.